Here is a 202-residue protein sequence, read N- to C-terminus: Small ribosomal subunit protein uS4c (202 aa).

The S4 RNA-binding domain occupies 90–153 (MRLDNIIFRL…KSQAIISKNL (64 aa)).

It belongs to the universal ribosomal protein uS4 family. As to quaternary structure, part of the 30S ribosomal subunit. Contacts protein S5. The interaction surface between S4 and S5 is involved in control of translational fidelity.

It localises to the plastid. The protein localises to the chloroplast. One of the primary rRNA binding proteins, it binds directly to 16S rRNA where it nucleates assembly of the body of the 30S subunit. In terms of biological role, with S5 and S12 plays an important role in translational accuracy. This Rosulabryum capillare (Capillary thread-moss) protein is Small ribosomal subunit protein uS4c (rps4).